Reading from the N-terminus, the 428-residue chain is Enolase (428 aa).

Position 163 (glutamine 163) interacts with (2R)-2-phosphoglycerate. The active-site Proton donor is glutamate 205. Positions 242, 286, and 313 each coordinate Mg(2+). (2R)-2-phosphoglycerate-binding residues include lysine 338, arginine 367, serine 368, and lysine 389. Residue lysine 338 is the Proton acceptor of the active site.

It belongs to the enolase family. Mg(2+) is required as a cofactor.

It localises to the cytoplasm. Its subcellular location is the secreted. It is found in the cell surface. The catalysed reaction is (2R)-2-phosphoglycerate = phosphoenolpyruvate + H2O. The protein operates within carbohydrate degradation; glycolysis; pyruvate from D-glyceraldehyde 3-phosphate: step 4/5. In terms of biological role, catalyzes the reversible conversion of 2-phosphoglycerate (2-PG) into phosphoenolpyruvate (PEP). It is essential for the degradation of carbohydrates via glycolysis. The chain is Enolase from Syntrophus aciditrophicus (strain SB).